Consider the following 324-residue polypeptide: Protein FAM228B (324 aa).

This sequence belongs to the FAM228 family.

This chain is Protein FAM228B (FAM228B), found in Homo sapiens (Human).